The primary structure comprises 83 residues: Small ribosomal subunit protein bS18 (83 aa).

This sequence belongs to the bacterial ribosomal protein bS18 family. In terms of assembly, part of the 30S ribosomal subunit. Forms a tight heterodimer with protein bS6.

Its function is as follows. Binds as a heterodimer with protein bS6 to the central domain of the 16S rRNA, where it helps stabilize the platform of the 30S subunit. The chain is Small ribosomal subunit protein bS18 from Cytophaga hutchinsonii (strain ATCC 33406 / DSM 1761 / CIP 103989 / NBRC 15051 / NCIMB 9469 / D465).